The following is a 707-amino-acid chain: Ribosomal RNA large subunit methyltransferase K/L (707 aa).

The region spanning 44–155 (VIYNLCLWSR…NDILTVSFDL (112 aa)) is the THUMP domain.

Belongs to the methyltransferase superfamily. RlmKL family.

It localises to the cytoplasm. The enzyme catalyses guanosine(2445) in 23S rRNA + S-adenosyl-L-methionine = N(2)-methylguanosine(2445) in 23S rRNA + S-adenosyl-L-homocysteine + H(+). It catalyses the reaction guanosine(2069) in 23S rRNA + S-adenosyl-L-methionine = N(2)-methylguanosine(2069) in 23S rRNA + S-adenosyl-L-homocysteine + H(+). Functionally, specifically methylates the guanine in position 2445 (m2G2445) and the guanine in position 2069 (m7G2069) of 23S rRNA. The polypeptide is Ribosomal RNA large subunit methyltransferase K/L (Legionella pneumophila (strain Lens)).